Here is a 186-residue protein sequence, read N- to C-terminus: MTDCSRCAGTTTSGPNHWSERIRDIADFPKQGIVFKDITPLLSDGPDFASALDEMAQPWRTTPLDAVLGIEARGFILGAALARELRTGFVPVRKPGKLPGRTLIQEYALEYGTDRIEMHEDALPRGARVLIVDDVLATGGTLRAALGLAAQLELEVVGAAVLVELQVLQGRQKWANDVPLLATLSY.

It belongs to the purine/pyrimidine phosphoribosyltransferase family. As to quaternary structure, homodimer.

Its subcellular location is the cytoplasm. The catalysed reaction is AMP + diphosphate = 5-phospho-alpha-D-ribose 1-diphosphate + adenine. The protein operates within purine metabolism; AMP biosynthesis via salvage pathway; AMP from adenine: step 1/1. Functionally, catalyzes a salvage reaction resulting in the formation of AMP, that is energically less costly than de novo synthesis. The protein is Adenine phosphoribosyltransferase of Xanthomonas euvesicatoria pv. vesicatoria (strain 85-10) (Xanthomonas campestris pv. vesicatoria).